A 346-amino-acid polypeptide reads, in one-letter code: MTEQRTIASSATREDEAADASIRPKRLADYLGQQPVRDQMEIYIQAAKARGEAMDHVLIFGPPGLGKTTLSHVIANELGVSLRVTSGPVIEKAGDLAALLTNLQPHDVLFIDEIHRLSPVVEEVLYPAMEDFQIDIMIGDGPAARSIKIDLPPFTLIGATTRAGLLTAPLRDRFGIVQRLEFYSPQELTRIVIRSAAILGIDCTPDGAAEIARRARGTPRIANRLLRRVRDFAQVKAAGHIDLTVAQAAMQMLKVDPEGFDELDRRMLRTIVDHFDGGPVGVESLAASLSEERGTLEDVIEPYLIQQGFLIRTARGRMVTPKAYLHLGLKPPRDSAPAIGEPGDLF.

Over residues 1 to 11 the composition is skewed to polar residues; it reads MTEQRTIASSA. The tract at residues 1-20 is disordered; it reads MTEQRTIASSATREDEAADA. Positions 1–183 are large ATPase domain (RuvB-L); it reads MTEQRTIASS…FGIVQRLEFY (183 aa). ATP-binding positions include I22, R23, G64, K67, T68, T69, 130–132, R173, Y183, and R220; that span reads EDF. T68 is a Mg(2+) binding site. The tract at residues 184 to 254 is small ATPAse domain (RuvB-S); sequence SPQELTRIVI…VAQAAMQMLK (71 aa). A head domain (RuvB-H) region spans residues 257 to 346; sequence PEGFDELDRR…PAIGEPGDLF (90 aa). The DNA site is built by R293, R312, and R317.

This sequence belongs to the RuvB family. As to quaternary structure, homohexamer. Forms an RuvA(8)-RuvB(12)-Holliday junction (HJ) complex. HJ DNA is sandwiched between 2 RuvA tetramers; dsDNA enters through RuvA and exits via RuvB. An RuvB hexamer assembles on each DNA strand where it exits the tetramer. Each RuvB hexamer is contacted by two RuvA subunits (via domain III) on 2 adjacent RuvB subunits; this complex drives branch migration. In the full resolvosome a probable DNA-RuvA(4)-RuvB(12)-RuvC(2) complex forms which resolves the HJ.

The protein resides in the cytoplasm. It catalyses the reaction ATP + H2O = ADP + phosphate + H(+). Its function is as follows. The RuvA-RuvB-RuvC complex processes Holliday junction (HJ) DNA during genetic recombination and DNA repair, while the RuvA-RuvB complex plays an important role in the rescue of blocked DNA replication forks via replication fork reversal (RFR). RuvA specifically binds to HJ cruciform DNA, conferring on it an open structure. The RuvB hexamer acts as an ATP-dependent pump, pulling dsDNA into and through the RuvAB complex. RuvB forms 2 homohexamers on either side of HJ DNA bound by 1 or 2 RuvA tetramers; 4 subunits per hexamer contact DNA at a time. Coordinated motions by a converter formed by DNA-disengaged RuvB subunits stimulates ATP hydrolysis and nucleotide exchange. Immobilization of the converter enables RuvB to convert the ATP-contained energy into a lever motion, pulling 2 nucleotides of DNA out of the RuvA tetramer per ATP hydrolyzed, thus driving DNA branch migration. The RuvB motors rotate together with the DNA substrate, which together with the progressing nucleotide cycle form the mechanistic basis for DNA recombination by continuous HJ branch migration. Branch migration allows RuvC to scan DNA until it finds its consensus sequence, where it cleaves and resolves cruciform DNA. The protein is Holliday junction branch migration complex subunit RuvB of Xanthomonas campestris pv. campestris (strain ATCC 33913 / DSM 3586 / NCPPB 528 / LMG 568 / P 25).